Consider the following 363-residue polypeptide: Protein RecA (363 aa).

77–84 contacts ATP; sequence GPESSGKT.

It belongs to the RecA family.

It is found in the cytoplasm. In terms of biological role, can catalyze the hydrolysis of ATP in the presence of single-stranded DNA, the ATP-dependent uptake of single-stranded DNA by duplex DNA, and the ATP-dependent hybridization of homologous single-stranded DNAs. It interacts with LexA causing its activation and leading to its autocatalytic cleavage. The chain is Protein RecA from Agrobacterium fabrum (strain C58 / ATCC 33970) (Agrobacterium tumefaciens (strain C58)).